Here is a 365-residue protein sequence, read N- to C-terminus: UDP-N-acetylglucosamine--N-acetylmuramyl-(pentapeptide) pyrophosphoryl-undecaprenol N-acetylglucosamine transferase (365 aa).

UDP-N-acetyl-alpha-D-glucosamine is bound by residues 19 to 21 (TGG), Asn131, Arg170, Ser201, Ile255, 274 to 279 (ALTVTE), and Gln300.

It belongs to the glycosyltransferase 28 family. MurG subfamily.

Its subcellular location is the cell inner membrane. The enzyme catalyses di-trans,octa-cis-undecaprenyl diphospho-N-acetyl-alpha-D-muramoyl-L-alanyl-D-glutamyl-meso-2,6-diaminopimeloyl-D-alanyl-D-alanine + UDP-N-acetyl-alpha-D-glucosamine = di-trans,octa-cis-undecaprenyl diphospho-[N-acetyl-alpha-D-glucosaminyl-(1-&gt;4)]-N-acetyl-alpha-D-muramoyl-L-alanyl-D-glutamyl-meso-2,6-diaminopimeloyl-D-alanyl-D-alanine + UDP + H(+). Its pathway is cell wall biogenesis; peptidoglycan biosynthesis. In terms of biological role, cell wall formation. Catalyzes the transfer of a GlcNAc subunit on undecaprenyl-pyrophosphoryl-MurNAc-pentapeptide (lipid intermediate I) to form undecaprenyl-pyrophosphoryl-MurNAc-(pentapeptide)GlcNAc (lipid intermediate II). This chain is UDP-N-acetylglucosamine--N-acetylmuramyl-(pentapeptide) pyrophosphoryl-undecaprenol N-acetylglucosamine transferase, found in Acinetobacter baylyi (strain ATCC 33305 / BD413 / ADP1).